The chain runs to 111 residues: MLDKLWDDIVAGPQPERGLEKLRKLTTTLKDDGASNQLMRSTSIPTTPTTPVTPTTPSSARKVDNVWRSVFNPGSNSATKSIGAHVFDKPLPNTPTVYDWMYSGDTRSKHR.

A disordered region spans residues 30 to 60 (KDDGASNQLMRSTSIPTTPTTPVTPTTPSSA). A compositionally biased stretch (low complexity) spans 41-59 (STSIPTTPTTPVTPTTPSS).

This sequence belongs to the DRM1/ARP family. In terms of tissue distribution, expressed in axilary buds and in non-growing stems and roots. Detected in sepals, stamens and carpels, but barely detected in petals or leaflets.

This Pisum sativum (Garden pea) protein is Dormancy-associated protein 1.